A 236-amino-acid polypeptide reads, in one-letter code: 7-cyano-7-deazaguanine synthase (236 aa).

7-17 contacts ATP; that stretch reads CSGGLDSVTLA. Zn(2+) is bound by residues C185, C193, C196, and C199.

This sequence belongs to the QueC family. It depends on Zn(2+) as a cofactor.

It catalyses the reaction 7-carboxy-7-deazaguanine + NH4(+) + ATP = 7-cyano-7-deazaguanine + ADP + phosphate + H2O + H(+). It participates in purine metabolism; 7-cyano-7-deazaguanine biosynthesis. In terms of biological role, catalyzes the ATP-dependent conversion of 7-carboxy-7-deazaguanine (CDG) to 7-cyano-7-deazaguanine (preQ(0)). In Rhizobium johnstonii (strain DSM 114642 / LMG 32736 / 3841) (Rhizobium leguminosarum bv. viciae), this protein is 7-cyano-7-deazaguanine synthase.